The sequence spans 557 residues: Formate--tetrahydrofolate ligase 2 (557 aa).

An ATP-binding site is contributed by 66–73; sequence TPAGEGKT.

This sequence belongs to the formate--tetrahydrofolate ligase family.

It catalyses the reaction (6S)-5,6,7,8-tetrahydrofolate + formate + ATP = (6R)-10-formyltetrahydrofolate + ADP + phosphate. The protein operates within one-carbon metabolism; tetrahydrofolate interconversion. This is Formate--tetrahydrofolate ligase 2 from Streptococcus pyogenes serotype M6 (strain ATCC BAA-946 / MGAS10394).